A 160-amino-acid polypeptide reads, in one-letter code: Non-secretory ribonuclease (160 aa).

A signal peptide spans 1–27 (MVPKLFTSPICLLLLLGLMGVEGSLHA). Trp34 is a glycosylation site (C-linked (Man) tryptophan). His42 functions as the Proton acceptor in the catalytic mechanism. Asn44 carries an N-linked (GlcNAc...) asparagine glycan. Disulfide bonds link Cys50–Cys110, Cys64–Cys122, Cys82–Cys137, and Cys89–Cys98. Tyr60 carries the 3'-nitrotyrosine modification. A substrate-binding site is contributed by 65–69 (KNQNT). 4 N-linked (GlcNAc...) asparagine glycosylation sites follow: Asn92, Asn111, Asn118, and Asn138. Catalysis depends on His155, which acts as the Proton donor.

Belongs to the pancreatic ribonuclease family. As to quaternary structure, interacts with and forms a tight 1:1 complex with RNH1. Dimerization of two such complexes may occur.

It is found in the lysosome. The protein resides in the cytoplasmic granule. It carries out the reaction an [RNA] containing cytidine + H2O = an [RNA]-3'-cytidine-3'-phosphate + a 5'-hydroxy-ribonucleotide-3'-[RNA].. The enzyme catalyses an [RNA] containing uridine + H2O = an [RNA]-3'-uridine-3'-phosphate + a 5'-hydroxy-ribonucleotide-3'-[RNA].. In terms of biological role, this is a non-secretory ribonuclease. It is a pyrimidine specific nuclease with a slight preference for U. Cytotoxin and helminthotoxin. Possesses a wide variety of biological activities. This Chlorocebus aethiops (Green monkey) protein is Non-secretory ribonuclease (RNASE2).